The sequence spans 383 residues: NIPA-like protein 2 (383 aa).

N23 and N33 each carry an N-linked (GlcNAc...) asparagine glycan. The next 9 membrane-spanning stretches (helical) occupy residues 46–66 (IHLF…ISLN), 88–108 (VLWL…FAAY), 115–135 (LIAP…VLFL), 144–164 (LLGM…APNI), 177–197 (FVGW…CILL), 208–228 (IVVL…SVKA), 243–263 (LTYA…VFQV), 278–298 (VVPV…IIFY), and 306–326 (FLTV…VFLV). The tract at residues 352 to 383 (DKVQPDSNGLSYGTLPDGGDSTRGQCGEKKES) is disordered.

This sequence belongs to the NIPA family.

It localises to the membrane. This Mus musculus (Mouse) protein is NIPA-like protein 2 (Nipal2).